The sequence spans 152 residues: Protein NrdI (152 aa).

This sequence belongs to the NrdI family.

Its function is as follows. Probably involved in ribonucleotide reductase function. The polypeptide is Protein NrdI (Rhodococcus opacus (strain B4)).